Here is a 351-residue protein sequence, read N- to C-terminus: Foldase protein PrsA 1 (351 aa).

A signal peptide spans 1 to 22; sequence MKNSNKLIASVVTLASVMALAA. C23 carries N-palmitoyl cysteine lipidation. C23 carries S-diacylglycerol cysteine lipidation. Residues 145 to 240 enclose the PpiC domain; the sequence is TPTMAVEMIT…KKFYIVKVTK (96 aa). Low complexity-rich tracts occupy residues 303 to 317 and 326 to 351; these read KTKAASESSTTSESS and ESEQTQTSSAEEPTETEAQTQEPAAQ. The tract at residues 303 to 351 is disordered; the sequence is KTKAASESSTTSESSKAAEENPSESEQTQTSSAEEPTETEAQTQEPAAQ.

Belongs to the PrsA family.

It localises to the cell membrane. The catalysed reaction is [protein]-peptidylproline (omega=180) = [protein]-peptidylproline (omega=0). In terms of biological role, plays a major role in protein secretion by helping the post-translocational extracellular folding of several secreted proteins. The polypeptide is Foldase protein PrsA 1 (prsA1) (Streptococcus pyogenes serotype M1).